Here is a 489-residue protein sequence, read N- to C-terminus: UDP-N-acetylmuramoyl-L-alanyl-D-glutamate--2,6-diaminopimelate ligase (489 aa).

Ser32 contributes to the UDP-N-acetyl-alpha-D-muramoyl-L-alanyl-D-glutamate binding site. 113-119 (GTNGKTT) contacts ATP. Residues 154-155 (TT), Ser181, Gln187, and Arg189 contribute to the UDP-N-acetyl-alpha-D-muramoyl-L-alanyl-D-glutamate site. Residue Lys221 is modified to N6-carboxylysine. Residues Arg381, 405-408 (DNPR), Gly456, and Glu460 each bind meso-2,6-diaminopimelate. The Meso-diaminopimelate recognition motif signature appears at 405 to 408 (DNPR).

Belongs to the MurCDEF family. MurE subfamily. It depends on Mg(2+) as a cofactor. Post-translationally, carboxylation is probably crucial for Mg(2+) binding and, consequently, for the gamma-phosphate positioning of ATP.

The protein resides in the cytoplasm. It carries out the reaction UDP-N-acetyl-alpha-D-muramoyl-L-alanyl-D-glutamate + meso-2,6-diaminopimelate + ATP = UDP-N-acetyl-alpha-D-muramoyl-L-alanyl-gamma-D-glutamyl-meso-2,6-diaminopimelate + ADP + phosphate + H(+). It participates in cell wall biogenesis; peptidoglycan biosynthesis. In terms of biological role, catalyzes the addition of meso-diaminopimelic acid to the nucleotide precursor UDP-N-acetylmuramoyl-L-alanyl-D-glutamate (UMAG) in the biosynthesis of bacterial cell-wall peptidoglycan. The polypeptide is UDP-N-acetylmuramoyl-L-alanyl-D-glutamate--2,6-diaminopimelate ligase (Gloeobacter violaceus (strain ATCC 29082 / PCC 7421)).